Reading from the N-terminus, the 312-residue chain is Bifunctional pinoresinol-lariciresinol reductase (312 aa).

NADP(+) contacts are provided by residues 10-16, Arg-35, and Lys-44; that span reads GGTGYIG. Lys-136 serves as the catalytic Proton acceptor. Arg-140 provides a ligand contact to NADP(+). His-268 lines the substrate pocket.

This sequence belongs to the NmrA-type oxidoreductase family. Isoflavone reductase subfamily. In terms of assembly, dimer. In terms of tissue distribution, expressed in seed coats, but not in embryos, leaves, stems and roots.

Reductase involved in lignan biosynthesis. Catalyzes the sequential conversion of pinoresinol into lariciresinol and of lariciresinol into secoisolariciresinol. Abstracts the 4R-hydride from the NADPH cofactor during catalysis. The polypeptide is Bifunctional pinoresinol-lariciresinol reductase (Linum usitatissimum (Flax)).